A 55-amino-acid polypeptide reads, in one-letter code: Large ribosomal subunit protein bL33 (55 aa).

It belongs to the bacterial ribosomal protein bL33 family.

The polypeptide is Large ribosomal subunit protein bL33 (Rhizobium meliloti (strain 1021) (Ensifer meliloti)).